The following is a 1323-amino-acid chain: ABC transporter gloK (1323 aa).

A run of 7 helical transmembrane segments spans residues 6 to 26 (AIASIFTAIVCFKFIILTLEA), 102 to 122 (PHALLKVMLATFKGLLLAGIL), 138 to 158 (VAYGLIAAYAIVYIGIAVMST), 217 to 237 (IWASLIEIALSLWLLEVRLGV), 240 to 260 (VAAVFVIIGNICTLLGCVFGF), 325 to 345 (LLVGIVTLSYVSTTMAPVFAF), and 359 to 379 (PLLAASAYTSLTIFSLLGQAV). The ABC transmembrane type-1 1 domain maps to 142–380 (LIAAYAIVYI…IFSLLGQAVS (239 aa)). Positions 471-697 (IRDCSACWSK…SSYLESLGTR (227 aa)) constitute an ABC transporter 1 domain. 503 to 510 (GPIGSGKS) serves as a coordination point for ATP. The next 7 membrane-spanning stretches (helical) occupy residues 748–768 (GWVTWWVFVLLCSGFVFGLVF), 795–815 (YALWPLMAIVIFLGACAWLMI), 821–841 (AAIQFHGILLNSALSAPLVYF), 859–879 (LIDMELPTALIGTTVTFLSCI), 891–910 (YVAAAIPALIVFLYYIQLFY), 976–996 (LNLTLELAVAFLAIILVSIAL), and 1006–1026 (IGVALLSIVGFGLNLKTLVYT). One can recognise an ABC transmembrane type-1 2 domain in the interval 752 to 1031 (WWVFVLLCSG…TLVYTWTSLE (280 aa)). Positions 1069 to 1300 (IRFQSVSAAY…PSFFASLLKA (232 aa)) constitute an ABC transporter 2 domain. 1103 to 1110 (GRTGSGKS) contacts ATP.

The protein belongs to the ABC transporter superfamily. ABCC family. Conjugate transporter (TC 3.A.1.208) subfamily.

It is found in the cell membrane. Its function is as follows. 3-isopropylmalate dehydratase large subunit; part of the gene cluster that mediates the biosynthesis of pneumocandins, lipohexapeptides of the echinocandin family that prevent fungal cell wall formation by non-competitive inhibition of beta-1,3-glucan synthase. Possibly secretes antifungal pneumocandins, thus avoiding of intracellular accumulation and ameliorating the toxicity to the producing cells. The polypeptide is ABC transporter gloK (Glarea lozoyensis (strain ATCC 20868 / MF5171)).